Here is a 212-residue protein sequence, read N- to C-terminus: MAETKEFKTLYNLFIDSYLQKLAQHSIPTNVTCAIHIGEVIGQFKNCALRITNKCMSNSRLSFTLMVESFIEVISLLPEKDRRAIAEEIGIDLDDVPSVVSKLEKNCNAYAEVNNIIDIQKLNIGECSAPPGQHMLLQIVNTGSAEANCGLQTIVKSLNKIYVPPIIENRLPYYDPWFLVGVAIILVIFTVAICSIRRNLALKYRYGTFLYV.

Residues 1-175 (MAETKEFKTL…IIENRLPYYD (175 aa)) lie on the Virion surface side of the membrane. 3 disulfide bridges follow: Cys33-Cys55, Cys47-Cys127, and Cys107-Cys149. Residues 176-196 (PWFLVGVAIILVIFTVAICSI) traverse the membrane as a helical segment. Residues 197 to 212 (RRNLALKYRYGTFLYV) are Intravirion-facing.

This sequence belongs to the orthopoxvirus OPG053 family. As to quaternary structure, component of the entry fusion complex (EFC) composed of OPG053, OPG076, OPG086, OPG094, OPG095, OPG099, OPG107, OPG143, OPG104, OPG147 and OPG155. Except for OPG095 and OPG052, each of the EFC proteins is required for assembly or stability of the complex. In terms of processing, disulfid bonds are oxidized in the cytoplasm by OPG088 protein. Post-translationally, unglycosylated because produced in viral factories instead of the classic ER -Golgi route.

The protein localises to the virion membrane. Functionally, component of the entry fusion complex (EFC), which consists of 11 proteins. During cell infection, this complex mediates entry of the virion core into the host cytoplasm by a two-step mechanism consisting of lipid mixing of the viral and cellular membranes and subsequent pore formation. The protein is EFC-associated protein OPG053 (OPG053) of Monkeypox virus.